The sequence spans 250 residues: uncharacterized protein (250 aa).

4Fe-4S ferredoxin-type domains lie at 38 to 67 (KLLYINETKCIRCNLCYKECPVDAIEKAKV), 69 to 98 (KSAKIIEDKCVKCEICAQTCPVGAIYVIEG), 124 to 153 (KKYELDENTCIKCGICARFCPTNAIKAVRR), 154 to 183 (KSIEVNLDLCMGCGACAEVCPKKCIKVERE), 191 to 220 (RDIEVDKNLCVGCLVCIEECPINAIDQDGD), and 220 to 249 (DKVKINKDKCILCGRCVDVCPTNAIKMWEK). [4Fe-4S] cluster is bound by residues Cys47, Cys50, Cys53, Cys57, Cys78, Cys81, Cys84, Cys88, Cys133, Cys136, Cys139, Cys143, Cys163, Cys166, Cys169, Cys173, Cys200, Cys203, Cys206, Cys210, Cys229, Cys232, Cys235, and Cys239.

This is an uncharacterized protein from Methanocaldococcus jannaschii (strain ATCC 43067 / DSM 2661 / JAL-1 / JCM 10045 / NBRC 100440) (Methanococcus jannaschii).